Reading from the N-terminus, the 155-residue chain is MAMPHPLECCCPQCLPSSESFPIYGEQEIPCSETQAETTPVEKTVRANVLTDILDDHYYAILASLFIIALWLLYIYLSSIPTETGPYFYQDLNSVKIYGIGATNPEVIAAIHHWQKYPFGESPMWGGLISVLSILLKPLTLVFALSFFLLLSSKR.

The Cytoplasmic segment spans residues 1-59 (MAMPHPLECCCPQCLPSSESFPIYGEQEIPCSETQAETTPVEKTVRANVLTDILDDHYY). Residues 60 to 80 (AILASLFIIALWLLYIYLSSI) form a helical membrane-spanning segment. Topologically, residues 81–130 (PTETGPYFYQDLNSVKIYGIGATNPEVIAAIHHWQKYPFGESPMWGGLIS) are lumenal. The Involved in plasmodesmata targeting and virus cell-to-cell movement signature appears at 89–93 (YQDLN). The chain crosses the membrane as a helical span at residues 131–151 (VLSILLKPLTLVFALSFFLLL). Positions 150 to 155 (LLSSKR) are required for attachment to the host plasmodesmata-associated membrane compartments. Residues 152–155 (SSKR) are Cytoplasmic-facing.

The protein belongs to the virgaviridae TGB3 movement protein family. In terms of assembly, interacts with movement proteins TGB1 and TGB2. TGB1-TGB3-TGB2 complex formation is enhanced by ATP hydrolysis.

It is found in the host cell junction. The protein resides in the host plasmodesma. The protein localises to the host endoplasmic reticulum membrane. Its subcellular location is the host cytoplasm. It localises to the host cytoskeleton. Its function is as follows. Participates in the transport of viral genome to neighboring plant cells directly through plasmodesmata, without any budding. TGBp2 and TGBp3 are necessary for intracellular delivery of TGBp1-containing vRNPs to plasmodesmata. Can gate plasmodesmata and increase their size exclusion limit. Induces host actin cytoskeleton network thickening, which probably plays a major role in virus cell-to-cell movement. The chain is Movement protein TGB3 from Hordeum vulgare (Barley).